A 117-amino-acid polypeptide reads, in one-letter code: Hemerythrin subunit beta (117 aa).

Fe cation contacts are provided by H24, H53, E57, H72, H76, H105, and D110.

The protein belongs to the hemerythrin family. As to quaternary structure, octamer composed of two types of chains: alpha and beta.

Its function is as follows. Hemerythrin is a respiratory protein in blood cells of certain marine worms. The oxygen-binding site in each chain contains two iron atoms. The chain is Hemerythrin subunit beta from Lingula reevii (Inarticulated brachiopod).